We begin with the raw amino-acid sequence, 282 residues long: Biotin synthase (282 aa).

The region spanning 1-228 (MQEIFLCSIS…NARLMVAGGR (228 aa)) is the Radical SAM core domain. Residues C17, C21, and C24 each coordinate [4Fe-4S] cluster. Residues C61, C96, C154, and R221 each contribute to the [2Fe-2S] cluster site.

It belongs to the radical SAM superfamily. Biotin synthase family. Homodimer. Requires [4Fe-4S] cluster as cofactor. [2Fe-2S] cluster is required as a cofactor.

It carries out the reaction (4R,5S)-dethiobiotin + (sulfur carrier)-SH + 2 reduced [2Fe-2S]-[ferredoxin] + 2 S-adenosyl-L-methionine = (sulfur carrier)-H + biotin + 2 5'-deoxyadenosine + 2 L-methionine + 2 oxidized [2Fe-2S]-[ferredoxin]. It functions in the pathway cofactor biosynthesis; biotin biosynthesis; biotin from 7,8-diaminononanoate: step 2/2. Functionally, catalyzes the conversion of dethiobiotin (DTB) to biotin by the insertion of a sulfur atom into dethiobiotin via a radical-based mechanism. This Helicobacter pylori (strain Shi470) protein is Biotin synthase.